We begin with the raw amino-acid sequence, 90 residues long: WAP four-disulfide core domain protein 12 (90 aa).

The first 23 residues, 1–23 (MGSSSFLVLMVSLALVTLVAVEG), serve as a signal peptide directing secretion. A WAP domain is found at 27 to 74 (GIEKAGVCPADNVRCFKSDPPQCHTDQDCLGERKCCYLHCGFKCVIPV). Disulfide bonds link Cys34–Cys62, Cys41–Cys66, Cys49–Cys61, and Cys55–Cys70.

Its subcellular location is the secreted. In terms of biological role, antibacterial protein. Putative acid-stable proteinase inhibitor. This chain is WAP four-disulfide core domain protein 12 (WFDC12), found in Gorilla gorilla gorilla (Western lowland gorilla).